Here is a 306-residue protein sequence, read N- to C-terminus: UDP-N-acetylenolpyruvoylglucosamine reductase (306 aa).

The FAD-binding PCMH-type domain maps to 34–198 (VGGPADLLIT…LEVTFKLHNS (165 aa)). The active site involves arginine 177. Serine 227 (proton donor) is an active-site residue. The active site involves glutamate 297.

Belongs to the MurB family. It depends on FAD as a cofactor.

The protein localises to the cytoplasm. It carries out the reaction UDP-N-acetyl-alpha-D-muramate + NADP(+) = UDP-N-acetyl-3-O-(1-carboxyvinyl)-alpha-D-glucosamine + NADPH + H(+). It functions in the pathway cell wall biogenesis; peptidoglycan biosynthesis. In terms of biological role, cell wall formation. The protein is UDP-N-acetylenolpyruvoylglucosamine reductase of Clostridium botulinum (strain Langeland / NCTC 10281 / Type F).